The sequence spans 445 residues: Exodeoxyribonuclease 7 large subunit (445 aa).

This sequence belongs to the XseA family. As to quaternary structure, heterooligomer composed of large and small subunits.

The protein resides in the cytoplasm. It carries out the reaction Exonucleolytic cleavage in either 5'- to 3'- or 3'- to 5'-direction to yield nucleoside 5'-phosphates.. In terms of biological role, bidirectionally degrades single-stranded DNA into large acid-insoluble oligonucleotides, which are then degraded further into small acid-soluble oligonucleotides. The sequence is that of Exodeoxyribonuclease 7 large subunit from Xanthomonas axonopodis pv. citri (strain 306).